A 61-amino-acid polypeptide reads, in one-letter code: Small ribosomal subunit protein uS14 (61 aa).

4 residues coordinate Zn(2+): Cys24, Cys27, Cys40, and Cys43.

This sequence belongs to the universal ribosomal protein uS14 family. Zinc-binding uS14 subfamily. In terms of assembly, part of the 30S ribosomal subunit. Contacts proteins S3 and S10. It depends on Zn(2+) as a cofactor.

Functionally, binds 16S rRNA, required for the assembly of 30S particles and may also be responsible for determining the conformation of the 16S rRNA at the A site. The polypeptide is Small ribosomal subunit protein uS14 (Mycobacterium avium (strain 104)).